A 222-amino-acid polypeptide reads, in one-letter code: Cytidylate kinase (222 aa).

10–18 (GPAGSGKSS) provides a ligand contact to ATP.

This sequence belongs to the cytidylate kinase family. Type 1 subfamily.

It localises to the cytoplasm. It carries out the reaction CMP + ATP = CDP + ADP. The enzyme catalyses dCMP + ATP = dCDP + ADP. The chain is Cytidylate kinase from Acholeplasma laidlawii (strain PG-8A).